The sequence spans 262 residues: Protein crossbronx-like (262 aa).

The UBC core domain maps to 15-179 (RQGYQVLAEY…VQELALFTKK (165 aa)).

The protein belongs to the ubiquitin-conjugating enzyme family. FTS subfamily.

The chain is Protein crossbronx-like from Drosophila pseudoobscura pseudoobscura (Fruit fly).